The primary structure comprises 379 residues: UDP-4-amino-4-deoxy-L-arabinose--oxoglutarate aminotransferase (379 aa).

N6-(pyridoxal phosphate)lysine is present on Lys-182.

This sequence belongs to the DegT/DnrJ/EryC1 family. ArnB subfamily. In terms of assembly, homodimer. Requires pyridoxal 5'-phosphate as cofactor.

It carries out the reaction UDP-4-amino-4-deoxy-beta-L-arabinose + 2-oxoglutarate = UDP-beta-L-threo-pentopyranos-4-ulose + L-glutamate. It functions in the pathway nucleotide-sugar biosynthesis; UDP-4-deoxy-4-formamido-beta-L-arabinose biosynthesis; UDP-4-deoxy-4-formamido-beta-L-arabinose from UDP-alpha-D-glucuronate: step 2/3. The protein operates within bacterial outer membrane biogenesis; lipopolysaccharide biosynthesis. Its function is as follows. Catalyzes the conversion of UDP-4-keto-arabinose (UDP-Ara4O) to UDP-4-amino-4-deoxy-L-arabinose (UDP-L-Ara4N). The modified arabinose is attached to lipid A and is required for resistance to polymyxin and cationic antimicrobial peptides. This chain is UDP-4-amino-4-deoxy-L-arabinose--oxoglutarate aminotransferase, found in Klebsiella pneumoniae subsp. pneumoniae (strain ATCC 700721 / MGH 78578).